The following is a 435-amino-acid chain: Glutamate-1-semialdehyde 2,1-aminomutase (435 aa).

Lys266 carries the post-translational modification N6-(pyridoxal phosphate)lysine.

Belongs to the class-III pyridoxal-phosphate-dependent aminotransferase family. HemL subfamily. As to quaternary structure, homodimer. Pyridoxal 5'-phosphate is required as a cofactor.

The protein resides in the cytoplasm. The catalysed reaction is (S)-4-amino-5-oxopentanoate = 5-aminolevulinate. The protein operates within porphyrin-containing compound metabolism; protoporphyrin-IX biosynthesis; 5-aminolevulinate from L-glutamyl-tRNA(Glu): step 2/2. The polypeptide is Glutamate-1-semialdehyde 2,1-aminomutase (Coxiella burnetii (strain RSA 331 / Henzerling II)).